The primary structure comprises 201 residues: Small ribosomal subunit protein uS4 (201 aa).

The S4 RNA-binding domain occupies 91–151; it reads SRLDNVVYRA…EKSQKMNWFE (61 aa).

The protein belongs to the universal ribosomal protein uS4 family. As to quaternary structure, part of the 30S ribosomal subunit. Contacts protein S5. The interaction surface between S4 and S5 is involved in control of translational fidelity.

In terms of biological role, one of the primary rRNA binding proteins, it binds directly to 16S rRNA where it nucleates assembly of the body of the 30S subunit. Functionally, with S5 and S12 plays an important role in translational accuracy. In Corynebacterium efficiens (strain DSM 44549 / YS-314 / AJ 12310 / JCM 11189 / NBRC 100395), this protein is Small ribosomal subunit protein uS4.